A 479-amino-acid chain; its full sequence is Glutamate--tRNA ligase (479 aa).

The 'HIGH' region signature appears at 9–19; the sequence is PSPTGNLHIGT. Positions 243-247 match the 'KMSKS' region motif; it reads KLSKR. Lys-246 serves as a coordination point for ATP.

This sequence belongs to the class-I aminoacyl-tRNA synthetase family. Glutamate--tRNA ligase type 1 subfamily. As to quaternary structure, monomer.

Its subcellular location is the cytoplasm. The enzyme catalyses tRNA(Glu) + L-glutamate + ATP = L-glutamyl-tRNA(Glu) + AMP + diphosphate. In terms of biological role, catalyzes the attachment of glutamate to tRNA(Glu) in a two-step reaction: glutamate is first activated by ATP to form Glu-AMP and then transferred to the acceptor end of tRNA(Glu). This is Glutamate--tRNA ligase from Synechococcus sp. (strain JA-3-3Ab) (Cyanobacteria bacterium Yellowstone A-Prime).